The following is a 686-amino-acid chain: Leucine-rich repeat-containing protein 49 (686 aa).

7 LRR repeats span residues 113 to 134 (HLRL…SNLQ), 135 to 156 (RLIF…STLK), 157 to 178 (SLRV…ENLK), 179 to 200 (NLDV…NHLC), 201 to 222 (DLRV…NGLD), 223 to 244 (SLTE…DNLP), and 245 to 266 (CLQR…SCLA). An LRRCT domain is found at 279 to 317 (NPIAQESWYKHTVLQNMMQLRQLDMKRITEEERRVASVV). Disordered stretches follow at residues 311-332 (RRVA…HKQS) and 359-381 (ASTQ…DGGN). Residues 319 to 341 (KKEEEKKRESHKQSLLKEKKRLT) adopt a coiled-coil conformation.

In terms of assembly, part of the neuronal tubulin polyglutamylase complex which contains TPGS1, TPGS2, TTLL1, LRRC49 and NICN1. Interacts with PCM1; TTLL1, TPGS1, TPGS2 and LRRC49.

Its subcellular location is the cytoplasm. It is found in the cytoskeleton. The protein resides in the microtubule organizing center. The protein localises to the centrosome. It localises to the centriolar satellite. Subunit of the tubulin polyglutamylase complex (TPGC). The complex mediates cilia and flagella polyglutamylation which is essential for their biogenesis and motility. This chain is Leucine-rich repeat-containing protein 49 (Lrrc49), found in Mus musculus (Mouse).